The chain runs to 286 residues: Pyridoxal kinase PdxY (286 aa).

Residues Ser9 and 44–45 contribute to the substrate site; that span reads TQ. Residues Asp111, Glu148, and Lys181 each contribute to the ATP site. Substrate is bound at residue Asp222.

Belongs to the pyridoxine kinase family. PdxY subfamily. As to quaternary structure, homodimer. Mg(2+) is required as a cofactor.

The catalysed reaction is pyridoxal + ATP = pyridoxal 5'-phosphate + ADP + H(+). Its pathway is cofactor metabolism; pyridoxal 5'-phosphate salvage; pyridoxal 5'-phosphate from pyridoxal: step 1/1. In terms of biological role, pyridoxal kinase involved in the salvage pathway of pyridoxal 5'-phosphate (PLP). Catalyzes the phosphorylation of pyridoxal to PLP. This chain is Pyridoxal kinase PdxY, found in Pasteurella multocida (strain Pm70).